The chain runs to 316 residues: Probable protein-L-isoaspartate O-methyltransferase (316 aa).

S-adenosyl-L-homocysteine is bound by residues 103–106 (ATIS), His-111, Ser-136, 157–158 (EH), 187–188 (DG), Thr-263, and Gln-268. The active site involves Ser-106.

Belongs to the methyltransferase superfamily. L-isoaspartyl/D-aspartyl protein methyltransferase family.

It is found in the cytoplasm. It localises to the cytosol. It carries out the reaction [protein]-L-isoaspartate + S-adenosyl-L-methionine = [protein]-L-isoaspartate alpha-methyl ester + S-adenosyl-L-homocysteine. Functionally, initiates the repair of damaged proteins by catalyzing methyl esterification of L-isoaspartyl and D-aspartyl residues produced by spontaneous isomerization and racemization of L-aspartyl and L-asparaginyl residues in aging peptides and proteins. The sequence is that of Probable protein-L-isoaspartate O-methyltransferase (pcmA) from Dictyostelium discoideum (Social amoeba).